The sequence spans 314 residues: Ribosomal RNA small subunit methyltransferase H (314 aa).

Residues Gly-40 to His-42, Asp-60, Phe-85, Asp-107, and Gln-114 contribute to the S-adenosyl-L-methionine site.

Belongs to the methyltransferase superfamily. RsmH family.

The protein localises to the cytoplasm. The catalysed reaction is cytidine(1402) in 16S rRNA + S-adenosyl-L-methionine = N(4)-methylcytidine(1402) in 16S rRNA + S-adenosyl-L-homocysteine + H(+). Its function is as follows. Specifically methylates the N4 position of cytidine in position 1402 (C1402) of 16S rRNA. The chain is Ribosomal RNA small subunit methyltransferase H from Hydrogenovibrio crunogenus (strain DSM 25203 / XCL-2) (Thiomicrospira crunogena).